The chain runs to 149 residues: Protein SprT-like (149 aa).

A SprT-like domain is found at 6–147; sequence LQALVEQISI…VCGRCRSKLK (142 aa). His-67 is a Zn(2+) binding site. Glu-68 is a catalytic residue. Zn(2+) is bound at residue His-71.

Belongs to the SprT family. It depends on Zn(2+) as a cofactor.

The protein resides in the cytoplasm. This chain is Protein SprT-like, found in Geobacillus kaustophilus (strain HTA426).